A 675-amino-acid polypeptide reads, in one-letter code: Putative methyl-accepting chemotaxis AlkN (675 aa).

Transmembrane regions (helical) follow at residues 24–44 (IALY…FLLS) and 303–323 (FPSV…FFII). The 52-residue stretch at 343–394 (QRNQAAILRLLDELGDLADGDLTVQATVTEDFTGAIADSINYSIDQLRNLVQ) folds into the HAMP domain. A Methyl-accepting transducer domain is found at 399–635 (SAVQVASAAQ…HISNTMNVIQ (237 aa)).

Belongs to the methyl-accepting chemotaxis (MCP) protein family.

It localises to the membrane. Its pathway is hydrocarbon metabolism; alkane degradation. In terms of biological role, chemotactic-signal transducers respond to changes in the concentration of attractants and repellents in the environment, transduce a signal from the outside to the inside of the cell, and facilitate sensory adaptation through the variation of the level of methylation. This chain is Putative methyl-accepting chemotaxis AlkN, found in Alcanivorax borkumensis (strain ATCC 700651 / DSM 11573 / NCIMB 13689 / SK2).